A 348-amino-acid chain; its full sequence is Rhodopsin (348 aa).

Position 1 is an N-acetylmethionine (M1). Residues 1–36 (MNGTEGPDFYIPMSNQTGVVRSPFEYPQYYLAEPWQ) lie on the Extracellular side of the membrane. Residues N2 and N15 are each glycosylated (N-linked (GlcNAc...) asparagine). The chain crosses the membrane as a helical span at residues 37 to 61 (FSMLAAYMFLLIVLGFPINFLTLYV). Topologically, residues 62-73 (TVQHKKLRTPLN) are cytoplasmic. The chain crosses the membrane as a helical span at residues 74–96 (YILLNLAVADLFMVLGGFTTTLY). Topologically, residues 97–110 (TSLHGYFVFGPTGC) are extracellular. A disulfide bridge connects residues C110 and C187. The chain crosses the membrane as a helical span at residues 111–133 (NVEGFFATLGGEIALWSLVVLAI). The 'Ionic lock' involved in activated form stabilization motif lies at 134-136 (ERY). Over 134–152 (ERYVVVCKPMSNFRFGENH) the chain is Cytoplasmic. The chain crosses the membrane as a helical span at residues 153–173 (AIMGVAFTWIMALACAAPPLV). The Extracellular portion of the chain corresponds to 174-202 (GWSRYIPEGMQCSCGIDYYTLKPEVNNES). E201 is a binding site for Zn(2+). A helical transmembrane segment spans residues 203-224 (FVIYMFVVHFTIPLIIIFFCYG). Residues 225-252 (QLVFTVKEAAAQQQESATTQKAEKEVTR) are Cytoplasmic-facing. The helical transmembrane segment at 253 to 274 (MVIIMVIAFLICWVPYASVAFY) threads the bilayer. Residues 275 to 286 (IFTHQGSNFGPI) lie on the Extracellular side of the membrane. Q279 is a Zn(2+) binding site. Residues 287–308 (FMTIPAFFAKSSSIYNPVIYIM) form a helical membrane-spanning segment. K296 is subject to N6-(retinylidene)lysine. Residues 309–348 (MNKQFRNCMLTTICCGKNPLGDDEASATASKTETSQVAPA) lie on the Cytoplasmic side of the membrane. 2 S-palmitoyl cysteine lipidation sites follow: C322 and C323. An interaction with SAG region spans residues 330–348 (DDEASATASKTETSQVAPA). S334 carries the phosphoserine modification. T336 is modified (phosphothreonine). S338 bears the Phosphoserine mark. T340 and T342 each carry phosphothreonine. S343 is modified (phosphoserine).

The protein belongs to the G-protein coupled receptor 1 family. Opsin subfamily. Homodimer. May form a complex composed of RHO, GRK1 and RCVRN in a Ca(2+)-dependent manner; RCVRN prevents the interaction between GRK1 and RHO. Interacts with GRK1. Interacts (phosphorylated form) with SAG. Interacts with GNAT1. Interacts with GNAT3. SAG and G-proteins compete for a common binding site. Interacts with PRCD; the interaction promotes PRCD stability. Forms a complex with ASAP1 and ARF4. Forms a complex with ASAP1, RAB11A, Rabin8/RAB3IP, ARF4 and RAB11FIP3; the complex regulates Golgi-to-cilia rhodopsin/RHO transport in photoreceptors. Post-translationally, phosphorylated on some or all of the serine and threonine residues present in the C-terminal region. In terms of processing, contains one covalently linked retinal chromophore. Upon light absorption, the covalently bound 11-cis-retinal is converted to all-trans-retinal. After hydrolysis of the Schiff base and release of the covalently bound all-trans-retinal, active rhodopsin is regenerated by binding of a fresh molecule of 11-cis-retinal.

It localises to the membrane. The protein resides in the cell projection. The protein localises to the cilium. It is found in the photoreceptor outer segment. Photoreceptor required for image-forming vision at low light intensity. Required for photoreceptor cell viability after birth. Light-induced isomerization of 11-cis to all-trans retinal triggers a conformational change that activates signaling via G-proteins. Subsequent receptor phosphorylation mediates displacement of the bound G-protein alpha subunit by the arrestin SAG and terminates signaling. The polypeptide is Rhodopsin (RHO) (Oryctolagus cuniculus (Rabbit)).